A 492-amino-acid polypeptide reads, in one-letter code: MTDLIRQDAAALAALIHSGEVSSVEVTRAHLDQIASTDETYRAFLHVAGEQALAAAKDVDDAIAAGSVPSGLAGVPLALKDVFTTRDMPTTCGSKILENWVPPYDATVTARLRGAGIPILGKTNMDEFAMGSSTENSAYGPTRNPWDVERVPGGSGGGSAAALAAFQAPLAIGTDTGGSIRQPAALTATVGVKPTYGTVSRFGLVACASSLDQGGPCARTVLDTALLHQVIAGHDPRDSTSVDEPVPDVVAAARAGASGDLKGVRVGVVTQLRGDGYQPGVMASFDAAVEQLTALGADVVEVSCPHFEYALPAYYLILPSEVSSNLARFDAMRYGMRVGDDGTHSAEEVMALTRAAGFGPEVKRRIMIGTYALSAGYYDAYYGRAQKVRTLIKRDLERAYEQVDVLVTPATPTTAFRLGEKVDDPLAMYQFDLCTLPLNLAGHCGMSVPSGLSADDGLPVGLQIMAPALADDRLYRVGAAYETARGALPAAL.

Active-site charge relay system residues include lysine 80 and serine 155. Serine 179 serves as the catalytic Acyl-ester intermediate.

It belongs to the amidase family. GatA subfamily. As to quaternary structure, heterotrimer of A, B and C subunits.

The enzyme catalyses L-glutamyl-tRNA(Gln) + L-glutamine + ATP + H2O = L-glutaminyl-tRNA(Gln) + L-glutamate + ADP + phosphate + H(+). Functionally, allows the formation of correctly charged Gln-tRNA(Gln) through the transamidation of misacylated Glu-tRNA(Gln) in organisms which lack glutaminyl-tRNA synthetase. The reaction takes place in the presence of glutamine and ATP through an activated gamma-phospho-Glu-tRNA(Gln). The sequence is that of Glutamyl-tRNA(Gln) amidotransferase subunit A from Mycobacteroides abscessus (strain ATCC 19977 / DSM 44196 / CCUG 20993 / CIP 104536 / JCM 13569 / NCTC 13031 / TMC 1543 / L948) (Mycobacterium abscessus).